Reading from the N-terminus, the 287-residue chain is Small ribosomal subunit protein uS2 (287 aa).

The interval 233-287 (HKAPQDDIEPMAEWEKQLLQSGDSSGETRPISGTDRPLDGDLSKGPAPQDEELSD) is disordered. Positions 250–259 (LLQSGDSSGE) are enriched in polar residues.

The protein belongs to the universal ribosomal protein uS2 family.

This chain is Small ribosomal subunit protein uS2, found in Tropheryma whipplei (strain TW08/27) (Whipple's bacillus).